Reading from the N-terminus, the 334-residue chain is Trans-1,2-dihydrobenzene-1,2-diol dehydrogenase (334 aa).

The protein belongs to the Gfo/Idh/MocA family. Homodimer. As to expression, kidney.

It catalyses the reaction (1R,2R)-1,2-dihydrobenzene-1,2-diol + NADP(+) = catechol + NADPH + H(+). The catalysed reaction is D-xylose + NADP(+) = D-xylono-1,5-lactone + NADPH + H(+). The sequence is that of Trans-1,2-dihydrobenzene-1,2-diol dehydrogenase (DHDH) from Macaca fascicularis (Crab-eating macaque).